Reading from the N-terminus, the 374-residue chain is Queuine tRNA-ribosyltransferase (374 aa).

Catalysis depends on aspartate 89, which acts as the Proton acceptor. Residues 89–93 (DSGGF), aspartate 143, glutamine 187, and glycine 214 contribute to the substrate site. An RNA binding region spans residues 245 to 251 (GVGKPED). Residue aspartate 264 is the Nucleophile of the active site. The tract at residues 269-273 (TRNAR) is RNA binding; important for wobble base 34 recognition. The Zn(2+) site is built by cysteine 302, cysteine 304, cysteine 307, and histidine 333.

This sequence belongs to the queuine tRNA-ribosyltransferase family. Homodimer. Within each dimer, one monomer is responsible for RNA recognition and catalysis, while the other monomer binds to the replacement base PreQ1. Requires Zn(2+) as cofactor.

It catalyses the reaction 7-aminomethyl-7-carbaguanine + guanosine(34) in tRNA = 7-aminomethyl-7-carbaguanosine(34) in tRNA + guanine. Its pathway is tRNA modification; tRNA-queuosine biosynthesis. Catalyzes the base-exchange of a guanine (G) residue with the queuine precursor 7-aminomethyl-7-deazaguanine (PreQ1) at position 34 (anticodon wobble position) in tRNAs with GU(N) anticodons (tRNA-Asp, -Asn, -His and -Tyr). Catalysis occurs through a double-displacement mechanism. The nucleophile active site attacks the C1' of nucleotide 34 to detach the guanine base from the RNA, forming a covalent enzyme-RNA intermediate. The proton acceptor active site deprotonates the incoming PreQ1, allowing a nucleophilic attack on the C1' of the ribose to form the product. After dissociation, two additional enzymatic reactions on the tRNA convert PreQ1 to queuine (Q), resulting in the hypermodified nucleoside queuosine (7-(((4,5-cis-dihydroxy-2-cyclopenten-1-yl)amino)methyl)-7-deazaguanosine). The sequence is that of Queuine tRNA-ribosyltransferase from Yersinia pseudotuberculosis serotype O:1b (strain IP 31758).